The following is a 34-amino-acid chain: Subtilosin-A (34 aa).

A cross-link (cyclopeptide (Asn-Gly)) is located at residues 1–34 (NKGCATCSIGIACLVDGPIPDFECAGATGLGLWG). Positions 7–28 (CSIGIACLVDGPIPDFECAGAT) form a cross-link, 2-cysteinyl-D-allo-threonine (Cys-Thr). Residues 13 to 22 (CLVDGPIPDF) constitute a cross-link (2-cysteinyl-L-phenylalanine (Cys-Phe)).

The protein belongs to the bacteriocin class V family. Alpha-amino of Asn-1 is covalently linked with the carboxyl of Gly-34 to form a cyclopeptide. Thioether cross-links are formed between cysteines and the alpha-carbons of other amino acids, Cys-7 to Thr-28 and Cys-13 to Phe-22. In forming this cross-link, Thr-28 is converted to D-amino acid.

Its subcellular location is the secreted. Has bactericidal activity against some Gram-positive bacteria. The polypeptide is Subtilosin-A (Cytobacillus firmus (Bacillus firmus)).